The chain runs to 200 residues: 3-isopropylmalate dehydratase small subunit (200 aa).

Belongs to the LeuD family. LeuD type 1 subfamily. Heterodimer of LeuC and LeuD.

The enzyme catalyses (2R,3S)-3-isopropylmalate = (2S)-2-isopropylmalate. Its pathway is amino-acid biosynthesis; L-leucine biosynthesis; L-leucine from 3-methyl-2-oxobutanoate: step 2/4. In terms of biological role, catalyzes the isomerization between 2-isopropylmalate and 3-isopropylmalate, via the formation of 2-isopropylmaleate. The polypeptide is 3-isopropylmalate dehydratase small subunit (Yersinia pestis bv. Antiqua (strain Antiqua)).